Here is an 89-residue protein sequence, read N- to C-terminus: Putative defensin-like protein 254 (89 aa).

The signal sequence occupies residues 1-20; the sequence is MHNISFKLLLLCDLFLSSSS. 2 disulfides stabilise this stretch: Cys-31-Cys-48 and Cys-37-Cys-55.

Belongs to the DEFL family.

It is found in the secreted. The chain is Putative defensin-like protein 254 from Arabidopsis thaliana (Mouse-ear cress).